A 279-amino-acid chain; its full sequence is Putative phosphoenolpyruvate synthase regulatory protein (279 aa).

159–166 (GVSRSGKT) lines the ADP pocket.

The protein belongs to the pyruvate, phosphate/water dikinase regulatory protein family. PSRP subfamily.

It carries out the reaction [pyruvate, water dikinase] + ADP = [pyruvate, water dikinase]-phosphate + AMP + H(+). The catalysed reaction is [pyruvate, water dikinase]-phosphate + phosphate + H(+) = [pyruvate, water dikinase] + diphosphate. Functionally, bifunctional serine/threonine kinase and phosphorylase involved in the regulation of the phosphoenolpyruvate synthase (PEPS) by catalyzing its phosphorylation/dephosphorylation. In Ralstonia nicotianae (strain ATCC BAA-1114 / GMI1000) (Ralstonia solanacearum), this protein is Putative phosphoenolpyruvate synthase regulatory protein.